The chain runs to 232 residues: MKCPRARVDIFKREIKTRELEPTEKNVYHGLTGPISLPPHNPVSIRFQEMVSWRLRSAVIGFFLLVSSTSGSSAASIPSAPTPDATRESPTGEPHRDRALSTETPTPEPSRDGGSTPEVLHVVTGPVRPRDRDPILERLAEILAETHSLHQLLTPGTGPREDEDEVFARALAAAEIAIGSVADRVMWKATLSCMLVVTSLVFAGVALWVIVARHGHFRVIPHERSRDWSPGL.

Low complexity predominate over residues 71–84 (GSSAASIPSAPTPD). The interval 71 to 121 (GSSAASIPSAPTPDATRESPTGEPHRDRALSTETPTPEPSRDGGSTPEVLH) is disordered. Helical transmembrane passes span 166-182 (VFAR…GSVA) and 195-211 (LVVT…WVIV).

It localises to the membrane. The chain is Putative membrane protein ORF8 (ORF8) from Ictalurid herpesvirus 1 (strain Auburn) (IcHV-1).